The following is an 85-amino-acid chain: Small ribosomal subunit protein uS17 (85 aa).

This sequence belongs to the universal ribosomal protein uS17 family. In terms of assembly, part of the 30S ribosomal subunit.

Functionally, one of the primary rRNA binding proteins, it binds specifically to the 5'-end of 16S ribosomal RNA. This chain is Small ribosomal subunit protein uS17, found in Blochmanniella floridana.